Here is a 273-residue protein sequence, read N- to C-terminus: Putative ABC transporter ATP-binding protein DVU_1056 (273 aa).

Residues 10-242 (LSLDDIHFTY…IHHGGEVAHE (233 aa)) form the ABC transporter domain. An ATP-binding site is contributed by 44–51 (GHNGSGKT). The tract at residues 234–273 (HHGGEVAHEHPSRGCCHQHDGSHHHAGHDDDHPHTSQTTE) is disordered. Residues 235 to 267 (HGGEVAHEHPSRGCCHQHDGSHHHAGHDDDHPH) are compositionally biased toward basic and acidic residues.

Belongs to the ABC transporter superfamily.

The protein resides in the cell inner membrane. Functionally, probably part of an ABC transporter complex. Responsible for energy coupling to the transport system. The sequence is that of Putative ABC transporter ATP-binding protein DVU_1056 from Nitratidesulfovibrio vulgaris (strain ATCC 29579 / DSM 644 / CCUG 34227 / NCIMB 8303 / VKM B-1760 / Hildenborough) (Desulfovibrio vulgaris).